A 234-amino-acid polypeptide reads, in one-letter code: Ubiquitin domain-containing protein 2 (234 aa).

The disordered stretch occupies residues 1–46; sequence MGGCVGAQHDSSGSLNENSEGTGVALGRNQPLKKEKPKWKSDYPMT. Residues 9-21 show a composition bias toward polar residues; sequence HDSSGSLNENSEG. Positions 32–41 are enriched in basic and acidic residues; sequence LKKEKPKWKS. The 76-residue stretch at 152–227 folds into the Ubiquitin-like domain; that stretch reads SQLRLRLSTG…VQVIMSQPLQ (76 aa).

Its subcellular location is the cytoplasm. The polypeptide is Ubiquitin domain-containing protein 2 (UBTD2) (Bos taurus (Bovine)).